We begin with the raw amino-acid sequence, 87 residues long: UPF0213 protein SYNAS_10430 (87 aa).

The GIY-YIG domain maps to 2 to 78; the sequence is SKNYVYILEC…KKMSRAEKLQ (77 aa).

Belongs to the UPF0213 family.

This is UPF0213 protein SYNAS_10430 from Syntrophus aciditrophicus (strain SB).